Consider the following 336-residue polypeptide: Anthranilate phosphoribosyltransferase (336 aa).

Residues G79, 82–83 (GD), T87, 89–92 (NIST), 107–115 (KHGNRSVSS), and S119 contribute to the 5-phospho-alpha-D-ribose 1-diphosphate site. G79 is an anthranilate binding site. A Mg(2+)-binding site is contributed by S91. N110 is a binding site for anthranilate. R165 contributes to the anthranilate binding site. The Mg(2+) site is built by D224 and E225.

It belongs to the anthranilate phosphoribosyltransferase family. In terms of assembly, homodimer. It depends on Mg(2+) as a cofactor.

The catalysed reaction is N-(5-phospho-beta-D-ribosyl)anthranilate + diphosphate = 5-phospho-alpha-D-ribose 1-diphosphate + anthranilate. It functions in the pathway amino-acid biosynthesis; L-tryptophan biosynthesis; L-tryptophan from chorismate: step 2/5. Catalyzes the transfer of the phosphoribosyl group of 5-phosphorylribose-1-pyrophosphate (PRPP) to anthranilate to yield N-(5'-phosphoribosyl)-anthranilate (PRA). This Endomicrobium trichonymphae protein is Anthranilate phosphoribosyltransferase.